Consider the following 280-residue polypeptide: DegV domain-containing protein SPy_1698/M5005_Spy1391 (280 aa).

Positions 3–280 (WKIVTDSGCD…DGGLLMGYEI (278 aa)) constitute a DegV domain. Hexadecanoate contacts are provided by serine 63 and serine 91.

Functionally, may bind long-chain fatty acids, such as palmitate, and may play a role in lipid transport or fatty acid metabolism. The chain is DegV domain-containing protein SPy_1698/M5005_Spy1391 from Streptococcus pyogenes serotype M1.